Reading from the N-terminus, the 233-residue chain is Large ribosomal subunit protein bL25 (233 aa).

The interval 1–23 (MATVRELKATARPKSGKGAARAE) is disordered.

Belongs to the bacterial ribosomal protein bL25 family. CTC subfamily. Part of the 50S ribosomal subunit; part of the 5S rRNA/L5/L18/L25 subcomplex. Contacts the 5S rRNA. Binds to the 5S rRNA independently of L5 and L18.

In terms of biological role, this is one of the proteins that binds to the 5S RNA in the ribosome where it forms part of the central protuberance. This is Large ribosomal subunit protein bL25 from Nitrobacter hamburgensis (strain DSM 10229 / NCIMB 13809 / X14).